Consider the following 96-residue polypeptide: uncharacterized protein (96 aa).

Residues 9–86 adopt a coiled-coil conformation; that stretch reads EELKSQAQVY…NKYADTVAER (78 aa).

This sequence belongs to the WXG100 family. sagEsxA-like subfamily.

This is an uncharacterized protein from Clostridium acetobutylicum (strain ATCC 824 / DSM 792 / JCM 1419 / IAM 19013 / LMG 5710 / NBRC 13948 / NRRL B-527 / VKM B-1787 / 2291 / W).